The primary structure comprises 502 residues: Cytochrome P450 2J3 (502 aa).

Cys448 serves as a coordination point for heme.

The protein belongs to the cytochrome P450 family. It depends on heme as a cofactor. In terms of tissue distribution, abundantly expressed in heart and liver.

The protein localises to the endoplasmic reticulum membrane. The protein resides in the microsome membrane. It catalyses the reaction an organic molecule + reduced [NADPH--hemoprotein reductase] + O2 = an alcohol + oxidized [NADPH--hemoprotein reductase] + H2O + H(+). In terms of biological role, this enzyme metabolizes arachidonic acid predominantly via a NADPH-dependent olefin epoxidation mainly to 14,15-, 11,12-, and 8,9-epoxyeicosatrienoic acids (EET). It also acts as an omega-1-hydroxylase by metabolizing arachidonic acid to 19-hydroxyeicosatetraenoic acid (19-OH-AA). This is Cytochrome P450 2J3 (Cyp2j3) from Rattus norvegicus (Rat).